The sequence spans 155 residues: UPF0735 ACT domain-containing protein CA_C1234 (155 aa).

An ACT domain is found at 79 to 154 (TISILIEHRR…NVLKVEIVAM (76 aa)).

It belongs to the UPF0735 family.

This is UPF0735 ACT domain-containing protein CA_C1234 from Clostridium acetobutylicum (strain ATCC 824 / DSM 792 / JCM 1419 / IAM 19013 / LMG 5710 / NBRC 13948 / NRRL B-527 / VKM B-1787 / 2291 / W).